Here is a 165-residue protein sequence, read N- to C-terminus: MIVTEILGNVHDDAGAALVGDRHREQVHLEGSALVKRIQRLRTDHGNEYGLRLPAGSPDLRDGDILTVDDDDEGERGNAVIVRVLSTDVLVISARSLREMAFVAHSLGNRHLPAQFFDADGPFGRDAMVVQHDHTVEDFLRAHDVPHERQERVMDVPFRHAEHTH.

This sequence belongs to the UreE family.

It localises to the cytoplasm. Its function is as follows. Involved in urease metallocenter assembly. Binds nickel. Probably functions as a nickel donor during metallocenter assembly. This chain is Urease accessory protein UreE, found in Micrococcus luteus (strain ATCC 4698 / DSM 20030 / JCM 1464 / CCM 169 / CCUG 5858 / IAM 1056 / NBRC 3333 / NCIMB 9278 / NCTC 2665 / VKM Ac-2230) (Micrococcus lysodeikticus).